A 434-amino-acid chain; its full sequence is UDP-glucose 6-dehydrogenase (434 aa).

Residues 2-19 (NITF…GIIM), Val11, Asp30, Lys35, Thr121, and Glu152 contribute to the NAD(+) site. Residues 148-152 (EFLRE), Lys204, Asn208, 249-253 (FLNAG), and Gly257 contribute to the substrate site. Cys260 functions as the Nucleophile in the catalytic mechanism. Lys263 is an NAD(+) binding site. Lys321 contributes to the substrate binding site. Arg328 serves as a coordination point for NAD(+).

It belongs to the UDP-glucose/GDP-mannose dehydrogenase family.

The enzyme catalyses UDP-alpha-D-glucose + 2 NAD(+) + H2O = UDP-alpha-D-glucuronate + 2 NADH + 3 H(+). The protein operates within nucleotide-sugar biosynthesis; UDP-alpha-D-glucuronate biosynthesis; UDP-alpha-D-glucuronate from UDP-alpha-D-glucose: step 1/1. This Rickettsia prowazekii (strain Madrid E) protein is UDP-glucose 6-dehydrogenase (udg).